Reading from the N-terminus, the 156-residue chain is Deoxyuridine 5'-triphosphate nucleotidohydrolase (156 aa).

The protein belongs to the dCTP deaminase family. Archaeal dUTPase subfamily. Homotrimer.

The catalysed reaction is dUTP + H2O = dUMP + diphosphate + H(+). It participates in pyrimidine metabolism; dUMP biosynthesis; dUMP from dCTP (dUTP route): step 2/2. Functionally, this enzyme is involved in nucleotide metabolism: it produces dUMP, the immediate precursor of thymidine nucleotides and it decreases the intracellular concentration of dUTP so that uracil cannot be incorporated into DNA. This chain is Deoxyuridine 5'-triphosphate nucleotidohydrolase, found in Methanocaldococcus jannaschii (strain ATCC 43067 / DSM 2661 / JAL-1 / JCM 10045 / NBRC 100440) (Methanococcus jannaschii).